Reading from the N-terminus, the 150-residue chain is Putative HTH-type transcriptional regulator HI_0379 (150 aa).

An HTH rrf2-type domain is found at 2–131 (KLTSKGRYAV…NEITLAELVN (130 aa)).

This chain is Putative HTH-type transcriptional regulator HI_0379, found in Haemophilus influenzae (strain ATCC 51907 / DSM 11121 / KW20 / Rd).